Consider the following 425-residue polypeptide: Proteinase-activated receptor 1 (425 aa).

An N-terminal signal peptide occupies residues 1–21 (MGPRRLLLVAACFSLCGPLLS). Residues 22 to 41 (ARTRARRPESKATNATLDPR) constitute a propeptide that is removed on maturation. Asn35, Asn62, and Asn75 each carry an N-linked (GlcNAc...) asparagine glycan. Over 42–102 (SFLLRNPNDK…SGYLTSSWLT (61 aa)) the chain is Extracellular. Residues 103–128 (LFVPSVYTGVFVVSLPLNIMAIVVFI) traverse the membrane as a helical segment. Residues 129-137 (LKMKVKKPA) lie on the Cytoplasmic side of the membrane. The chain crosses the membrane as a helical span at residues 138 to 157 (VVYMLHLATADVLFVSVLPF). Topologically, residues 158–176 (KISYYFSGSDWQFGSELCR) are extracellular. An intrachain disulfide couples Cys175 to Cys254. Residues 177–198 (FVTAAFYCNMYASILLMTVISI) traverse the membrane as a helical segment. At 199–218 (DRFLAVVYPMQSLSWRTLGR) the chain is on the cytoplasmic side. A helical transmembrane segment spans residues 219–239 (ASFTCLAIWALAIAGVVPLLL). Residues 240–268 (KEQTIQVPGLNITTCHDVLNETLLEGYYA) are Extracellular-facing. 2 N-linked (GlcNAc...) asparagine glycosylation sites follow: Asn250 and Asn259. The chain crosses the membrane as a helical span at residues 269–288 (YYFSAFSAVFFFVPLIISTV). Residues 289-311 (CYVSIIRCLSSSAVANRSKKSRA) lie on the Cytoplasmic side of the membrane. A helical transmembrane segment spans residues 312-334 (LFLSAAVFCIFIICFGPTNVLLI). Topologically, residues 335–350 (AHYSFLSHTSTTEAAY) are extracellular. The chain crosses the membrane as a helical span at residues 351-374 (FAYLLCVCVSSISCCIDPLIYYYA). Over 375–425 (SSECQRYVYSILCCKESSDPSSYNSSGQLMASKMDTCSSNLNNSIYKKLLT) the chain is Cytoplasmic. A Phosphoserine modification is found at Ser418.

This sequence belongs to the G-protein coupled receptor 1 family. In terms of processing, proteolytic cleavage by thrombin generates a new N-terminus that functions as a tethered ligand. Also proteolytically cleaved by cathepsin CTSG. Cleavage at 41-Arg-|-Ser-42 by CTSG results in receptor activation while cleavage at 55-Phe-|-Trp-56 results in inhibition of receptor activation. Phosphorylated in the C-terminal tail; probably mediating desensitization prior to the uncoupling and internalization of the receptor. In terms of tissue distribution, platelets and vascular endothelial cells.

The protein resides in the cell membrane. In terms of biological role, high affinity receptor that binds the activated thrombin, leading to calcium release from intracellular stores. The thrombin-activated receptor signaling pathway is mediated through PTX-insensitive G proteins, activation of phospholipase C resulting in the production of 1D-myo-inositol 1,4,5-trisphosphate (InsP3) which binds to InsP3 receptors causing calcium release from the stores. In astrocytes, the calcium released into the cytosol allows the Ca(2+)-dependent release of L-glutamate into the synaptic cleft through BEST1, that targets the neuronal postsynaptic GRIN2A/NMDAR receptor resulting in the synaptic plasticity regulation. May play a role in platelets activation and in vascular development. Mediates up-regulation of pro-inflammatory cytokines, such as MCP-1/CCL2 and IL6, triggered by coagulation factor Xa (F10) in cardiac fibroblasts and umbilical vein endothelial cells. The sequence is that of Proteinase-activated receptor 1 from Homo sapiens (Human).